The sequence spans 113 residues: Protein NATD1 (113 aa).

The N-acetyltransferase domain occupies 22-112; that stretch reads EHDRRRRQFT…PLPQYLERLQ (91 aa).

Belongs to the NATD1 family.

The protein is Protein NATD1 (NATD1) of Homo sapiens (Human).